The primary structure comprises 101 residues: NADH-quinone oxidoreductase subunit K (101 aa).

A run of 3 helical transmembrane segments spans residues 4-24 (LSHY…GIFL), 30-50 (IILL…FVAF), and 61-81 (IFVF…LAIL).

The protein belongs to the complex I subunit 4L family. As to quaternary structure, NDH-1 is composed of 14 different subunits. Subunits NuoA, H, J, K, L, M, N constitute the membrane sector of the complex.

Its subcellular location is the cell inner membrane. It carries out the reaction a quinone + NADH + 5 H(+)(in) = a quinol + NAD(+) + 4 H(+)(out). In terms of biological role, NDH-1 shuttles electrons from NADH, via FMN and iron-sulfur (Fe-S) centers, to quinones in the respiratory chain. The immediate electron acceptor for the enzyme in this species is believed to be ubiquinone. Couples the redox reaction to proton translocation (for every two electrons transferred, four hydrogen ions are translocated across the cytoplasmic membrane), and thus conserves the redox energy in a proton gradient. The sequence is that of NADH-quinone oxidoreductase subunit K from Nitrosomonas europaea (strain ATCC 19718 / CIP 103999 / KCTC 2705 / NBRC 14298).